The following is a 417-amino-acid chain: S-adenosylmethionine synthase (417 aa).

ATP is bound at residue H16. A Mg(2+)-binding site is contributed by D18. Position 44 (E44) interacts with K(+). L-methionine is bound by residues E57 and Q100. The flexible loop stretch occupies residues 100–110; that stretch reads QSPDIAQGVTS. ATP is bound by residues 175 to 177, 251 to 252, D260, 266 to 267, A283, and K287; these read DGK, KF, and RK. D260 provides a ligand contact to L-methionine. K291 contributes to the L-methionine binding site.

Belongs to the AdoMet synthase family. In terms of assembly, homotetramer; dimer of dimers. It depends on Mg(2+) as a cofactor. K(+) serves as cofactor.

It is found in the cytoplasm. It carries out the reaction L-methionine + ATP + H2O = S-adenosyl-L-methionine + phosphate + diphosphate. Its pathway is amino-acid biosynthesis; S-adenosyl-L-methionine biosynthesis; S-adenosyl-L-methionine from L-methionine: step 1/1. In terms of biological role, catalyzes the formation of S-adenosylmethionine (AdoMet) from methionine and ATP. The overall synthetic reaction is composed of two sequential steps, AdoMet formation and the subsequent tripolyphosphate hydrolysis which occurs prior to release of AdoMet from the enzyme. This Picosynechococcus sp. (strain ATCC 27264 / PCC 7002 / PR-6) (Agmenellum quadruplicatum) protein is S-adenosylmethionine synthase.